The primary structure comprises 200 residues: Superoxide dismutase [Mn] 1 (200 aa).

Mn(2+) contacts are provided by His-29, His-76, Asp-158, and His-162.

This sequence belongs to the iron/manganese superoxide dismutase family. The cofactor is Mn(2+).

It catalyses the reaction 2 superoxide + 2 H(+) = H2O2 + O2. Destroys superoxide anion radicals which are normally produced within the cells and which are toxic to biological systems. The chain is Superoxide dismutase [Mn] 1 (sod1) from Haloferax volcanii (strain ATCC 29605 / DSM 3757 / JCM 8879 / NBRC 14742 / NCIMB 2012 / VKM B-1768 / DS2) (Halobacterium volcanii).